A 297-amino-acid polypeptide reads, in one-letter code: MAALRQIAFYGKGGIGKSTTSQNTLAALVDLGQKILIVGCDPKADSTRLILNAKAQDTVLHLAATEGSVEDLELEDVLKVGYRGIKCVESGGPEPGVGCAGRGVITSINFLEENGAYNDVDYVSYDVLGDVVCGGFAMPIRENKAQEIYIVMSGEMMALYAANNIAKGILKYAHAGGVRLGGLICNERQTDRELDLAEALAARLNSKLIHFVPRDNIVQHAELRKMTVIQYAPNSKQAGEYRALAEKIHANSGRGTVPTPITMEELEDMLLDFGIMKSDEQMLAELHAKEAKVIAPH.

11–18 provides a ligand contact to ATP; the sequence is GKGGIGKS. Cys-99 lines the [4Fe-4S] cluster pocket. Arg-102 is modified (ADP-ribosylarginine; by dinitrogenase reductase ADP-ribosyltransferase). Cys-133 contacts [4Fe-4S] cluster.

Belongs to the NifH/BchL/ChlL family. As to quaternary structure, homodimer. [4Fe-4S] cluster serves as cofactor. In terms of processing, the reversible ADP-ribosylation of Arg-102 inactivates the nitrogenase reductase and regulates nitrogenase activity.

It catalyses the reaction N2 + 8 reduced [2Fe-2S]-[ferredoxin] + 16 ATP + 16 H2O = H2 + 8 oxidized [2Fe-2S]-[ferredoxin] + 2 NH4(+) + 16 ADP + 16 phosphate + 6 H(+). In terms of biological role, the key enzymatic reactions in nitrogen fixation are catalyzed by the nitrogenase complex, which has 2 components: the iron protein and the molybdenum-iron protein. In Rhizobium meliloti (strain 1021) (Ensifer meliloti), this protein is Nitrogenase iron protein (nifH).